The following is a 135-amino-acid chain: MAKNSRSPWIAKNLQRLLNVGLIMLAAILVVFLVKETIHLGKVLFLSNQETSSYMLIEGIVIYFLYFEFIALIVKYFESGYHFPLRYFIYIGITAIIRLIIVDHENPIDTLIYSGSILVLVVTLYLANTERLKRE.

The next 4 helical transmembrane spans lie at 20–40 (VGLI…TIHL), 54–74 (YMLI…ALIV), 82–102 (HFPL…LIIV), and 107–127 (PIDT…LYLA).

Belongs to the PsiE family.

The protein resides in the cell inner membrane. This is Protein PsiE homolog from Yersinia pestis (strain Pestoides F).